We begin with the raw amino-acid sequence, 441 residues long: Keratin, type I cytoskeletal 17 (441 aa).

A disordered region spans residues M1–S23. The segment at M1 to G91 is head. A compositionally biased stretch (low complexity) spans S9 to S23. Residue S12 is modified to Phosphoserine. K14 participates in a covalent cross-link: Glycyl lysine isopeptide (Lys-Gly) (interchain with G-Cter in SUMO1); alternate. K14 participates in a covalent cross-link: Glycyl lysine isopeptide (Lys-Gly) (interchain with G-Cter in SUMO2); alternate. 4 positions are modified to phosphoserine: S24, S30, S32, and S37. S42 carries the phosphoserine; by RPS6KA1 modification. The interval E92–Y128 is coil 1A. The 312-residue stretch at E92 to L403 folds into the IF rod domain. Residue T118 is modified to Phosphothreonine. A linker 1 region spans residues Q129–I146. The coil 1B stretch occupies residues E147–R238. A linker 12 region spans residues G239–S258. The coil 2 stretch occupies residues R259 to D400. Residue K286 forms a Glycyl lysine isopeptide (Lys-Gly) (interchain with G-Cter in SUMO2) linkage. Residue T287 is modified to Phosphothreonine. Position 331 is a phosphoserine (S331). The tract at residues A401–H441 is tail. Residues K407 and K409 each participate in a glycyl lysine isopeptide (Lys-Gly) (interchain with G-Cter in SUMO1); alternate cross-link. Residues K407 and K409 each participate in a glycyl lysine isopeptide (Lys-Gly) (interchain with G-Cter in SUMO2); alternate cross-link.

The protein belongs to the intermediate filament family. In terms of assembly, heterodimer of a type I and a type II keratin. KRT17 associates with KRT6 isomers (KRT6A or KRT6B). Interacts with TRADD and SFN. Post-translationally, phosphorylation at Ser-42 occurs in a growth- and stress-dependent fashion in skin keratinocytes, it has no effect on filament organization.

It localises to the cytoplasm. In terms of biological role, type I keratin involved in the formation and maintenance of various skin appendages, specifically in determining shape and orientation of hair. Required for the correct growth of hair follicles, in particular for the persistence of the anagen (growth) state. Modulates the function of TNF-alpha in the specific context of hair cycling. Regulates protein synthesis and epithelial cell growth through binding to the adapter protein SFN and by stimulating Akt/mTOR pathway. Involved in tissue repair. May be a marker of basal cell differentiation in complex epithelia and therefore indicative of a certain type of epithelial 'stem cells'. Acts as a promoter of epithelial proliferation by acting a regulator of immune response in skin: promotes Th1/Th17-dominated immune environment contributing to the development of basaloid skin tumors. May act as an autoantigen in the immunopathogenesis of psoriasis, with certain peptide regions being a major target for autoreactive T-cells and hence causing their proliferation. In Bos taurus (Bovine), this protein is Keratin, type I cytoskeletal 17.